Reading from the N-terminus, the 713-residue chain is Undecaprenyl-diphosphooligosaccharide--protein glycotransferase (713 aa).

Residues 1-11 lie on the Cytoplasmic side of the membrane; that stretch reads MLKKEYLKNPY. A helical transmembrane segment spans residues 12 to 35; it reads LVLFAMIVLAYVFSVFCRFYWVWW. Over 36–96 the chain is Periplasmic; the sequence is ASEFNEYFFN…YWLYKITPFS (61 aa). Residues 52–54 carry the DXD motif 1 motif; sequence SND. Residue aspartate 54 coordinates Mn(2+). Residues 97-122 traverse the membrane as a helical segment; it reads FESIILYMSTFLSSLVVIPIILLANE. At 123–125 the chain is on the cytoplasmic side; sequence YKR. Residues 126 to 144 traverse the membrane as a helical segment; it reads PLMGFVAALLASVANSYYN. The Periplasmic segment spans residues 145–152; that stretch reads RTMSGYYD. A Mn(2+)-binding site is contributed by aspartate 152. The DXD motif 2 motif lies at 152 to 154; sequence DTD. The chain crosses the membrane as a helical span at residues 153–174; sequence TDMLVIVLPMFILFFMVRMILK. Residues 175 to 176 are Cytoplasmic-facing; it reads KD. Residues 177–192 form a helical membrane-spanning segment; the sequence is FFSLIALPLFIGIYLW. Residues 193-197 lie on the Periplasmic side of the membrane; sequence WYPSS. Residue 194 to 196 participates in [alpha-D-GalNAc-(1-&gt;4)]2-[beta-D-Glc-(1-&gt;3)]-[alpha-D-GalNAc-(1-&gt;4)]2-alpha-D-GalNAc-(1-&gt;3)-alpha-D-diNAcBac-tri-trans,hepta-cis-undecaprenyl diphosphate binding; it reads YPS. Residues 198–215 form a helical membrane-spanning segment; sequence YTLNVALIGLFLIYTLIF. Residues 216-220 lie on the Cytoplasmic side of the membrane; sequence HRKEK. The chain crosses the membrane as a helical span at residues 221–233; the sequence is IFYIAVILSSLTL. Residues 234-237 are Periplasmic-facing; it reads SNIA. Residues 238-254 traverse the membrane as a helical segment; that stretch reads WFYQSAIIVILFALFAL. Over 255-260 the chain is Cytoplasmic; sequence EQKRLN. The chain crosses the membrane as a helical span at residues 261–278; it reads FMIIGILGSATLIFLILS. Residues 279 to 324 are Periplasmic-facing; sequence GGVDPILYQLKFYIFRSDESANLTQGFMYFNVNQTIQEVENVDFSE. Tyrosine 291 is a [alpha-D-GalNAc-(1-&gt;4)]2-[beta-D-Glc-(1-&gt;3)]-[alpha-D-GalNAc-(1-&gt;4)]2-alpha-D-GalNAc-(1-&gt;3)-alpha-D-diNAcBac-tri-trans,hepta-cis-undecaprenyl diphosphate binding site. Residues 313–316 carry the TIXE motif motif; the sequence is TIQE. Position 316 (glutamate 316) interacts with Mn(2+). A helical transmembrane segment spans residues 325-347; that stretch reads FMRRISGSEIVFLFSLFGFVWLL. Over 348 to 352 the chain is Cytoplasmic; the sequence is RKHKS. A helical membrane pass occupies residues 353 to 369; it reads MIMALPILVLGFLALKG. Residues 370–373 are Periplasmic-facing; it reads GLRF. Arginine 372 serves as a coordination point for [alpha-D-GalNAc-(1-&gt;4)]2-[beta-D-Glc-(1-&gt;3)]-[alpha-D-GalNAc-(1-&gt;4)]2-alpha-D-GalNAc-(1-&gt;3)-alpha-D-diNAcBac-tri-trans,hepta-cis-undecaprenyl diphosphate. The helical transmembrane segment at 374–396 threads the bilayer; that stretch reads TIYSVPVMALGFGFLLSEFKAIL. At 397-406 the chain is on the cytoplasmic side; the sequence is VKKYSQLTSN. The helical transmembrane segment at 407-427 threads the bilayer; sequence VCIVFATILTLAPVFIHIYNY. Over 428 to 713 the chain is Periplasmic; the sequence is KAPTVFSQNE…RDAKVFKLKI (286 aa). The interval 457 to 459 is interacts with target acceptor peptide in protein substrate; the sequence is WWD. The WWDYG motif signature appears at 457–461; the sequence is WWDYG. Tyrosine 462 is a binding site for [alpha-D-GalNAc-(1-&gt;4)]2-[beta-D-Glc-(1-&gt;3)]-[alpha-D-GalNAc-(1-&gt;4)]2-alpha-D-GalNAc-(1-&gt;3)-alpha-D-diNAcBac-tri-trans,hepta-cis-undecaprenyl diphosphate. Asparagine 534 is a glycosylation site (N-linked (DATDGlc) asparagine). An MI motif motif is present at residues 568-575; that stretch reads MSLIFSTV.

The protein belongs to the STT3 family. Mg(2+) serves as cofactor. It depends on Mn(2+) as a cofactor.

It is found in the cell inner membrane. It catalyses the reaction tritrans,heptacis-undecaprenyl diphosphooligosaccharide + [protein]-L-asparagine = tritrans,heptacis-undecaprenyl diphosphate + a glycoprotein with the oligosaccharide chain attached by N-beta-D-glycosyl linkage to protein L-asparagine.. The protein operates within protein modification; protein glycosylation. Oligosaccharyl transferase (OST) that catalyzes the initial transfer of a defined glycan (GalNAc(2)GlcGalNAc(3)Bac(NAc)(2) in eubacteria, where Bac(NAc)(2) is di-N-acetyl bacillosamine) from the lipid carrier undecaprenol-pyrophosphate to an asparagine residue within an Asp/Glu-Asn-X-Ser/Thr consensus motif in nascent polypeptide chains, the first step in protein N-glycosylation. The sequence is that of Undecaprenyl-diphosphooligosaccharide--protein glycotransferase (pglB) from Campylobacter jejuni subsp. jejuni serotype O:2 (strain ATCC 700819 / NCTC 11168).